A 402-amino-acid chain; its full sequence is Probable peptidoglycan glycosyltransferase FtsW (402 aa).

At 1–24 (MLYRLKLLLSGQNTKKERVRAKLE) the chain is on the cytoplasmic side. The chain crosses the membrane as a helical span at residues 25–45 (IDISIVFVMLGLLIFGWVMVT). Topologically, residues 46 to 63 (SASMVVALDDYNNPYFYS) are periplasmic. Residues 64–84 (IRQGFFAVIAIFLFLLALLVP) traverse the membrane as a helical segment. The Cytoplasmic segment spans residues 85–91 (TKNYEKN). Residues 92 to 112 (YNAFFFIMLIVLVAVLVPGVG) traverse the membrane as a helical segment. At 113–121 (KSVNGARRW) the chain is on the periplasmic side. A helical transmembrane segment spans residues 122–142 (IPLIIINIQVAELAKLLAIIF). The Cytoplasmic segment spans residues 143–160 (FSGYIAENLPKMTNFKEG). A run of 2 helical transmembrane segments spans residues 161 to 181 (ILTP…QPDF) and 182 to 202 (GSTV…GNKV). Residue arginine 203 is a topological domain, cytoplasmic. A helical transmembrane segment spans residues 204–224 (WYGLLIGAMLIMATMLVIISP). Over 225–284 (YRMHRITGFLHPWENANGSGYQLVQALIGFGRGGWFGDGLGNGVQKQFFLPEAHTDFITS) the chain is Periplasmic. The helical transmembrane segment at 285–305 (VIAEEIGVIGLMILLMVYLFI) threads the bilayer. The Cytoplasmic segment spans residues 306 to 324 (VFRAMNIAKMAFELKRYYQ). A helical membrane pass occupies residues 325 to 345 (AFLSYGISFWIGFQVFVNIGV). Residues 346–357 (NTGLLPTKGLTL) are Periplasmic-facing. Residues 358 to 378 (PLISYGGSSLLIMCFTLGILV) traverse the membrane as a helical segment. At 379 to 402 (RVDFENKLLADTINPKYIYKKVRK) the chain is on the cytoplasmic side.

The protein belongs to the SEDS family. FtsW subfamily.

The protein resides in the cell inner membrane. The enzyme catalyses [GlcNAc-(1-&gt;4)-Mur2Ac(oyl-L-Ala-gamma-D-Glu-L-Lys-D-Ala-D-Ala)](n)-di-trans,octa-cis-undecaprenyl diphosphate + beta-D-GlcNAc-(1-&gt;4)-Mur2Ac(oyl-L-Ala-gamma-D-Glu-L-Lys-D-Ala-D-Ala)-di-trans,octa-cis-undecaprenyl diphosphate = [GlcNAc-(1-&gt;4)-Mur2Ac(oyl-L-Ala-gamma-D-Glu-L-Lys-D-Ala-D-Ala)](n+1)-di-trans,octa-cis-undecaprenyl diphosphate + di-trans,octa-cis-undecaprenyl diphosphate + H(+). It participates in cell wall biogenesis; peptidoglycan biosynthesis. In terms of biological role, peptidoglycan polymerase that is essential for cell division. The chain is Probable peptidoglycan glycosyltransferase FtsW from Francisella salina.